The sequence spans 153 residues: Transcription antitermination protein NusB (153 aa).

The protein belongs to the NusB family.

In terms of biological role, involved in transcription antitermination. Required for transcription of ribosomal RNA (rRNA) genes. Binds specifically to the boxA antiterminator sequence of the ribosomal RNA (rrn) operons. This Beutenbergia cavernae (strain ATCC BAA-8 / DSM 12333 / CCUG 43141 / JCM 11478 / NBRC 16432 / NCIMB 13614 / HKI 0122) protein is Transcription antitermination protein NusB.